The primary structure comprises 180 residues: Inner membrane assembly complex subunit 17 (180 aa).

A mitochondrion-targeting transit peptide spans 1–36 (MMIRNQLYRKCIIGGGRSILNGWVINGTVPNIGLRY). At 37 to 105 (LRSGIVTRSN…RKTQDIPIKR (69 aa)) the chain is on the mitochondrial matrix side. The helical transmembrane segment at 106-128 (FIRPTWMFLLMSSTFYLLGHYIW) threads the bilayer. A coiled-coil region spans residues 129 to 163 (WKLEYDEVEKELDRQVTALEEELHNLIEEHRVHGE). Residues 129–180 (WKLEYDEVEKELDRQVTALEEELHNLIEEHRVHGENEAIKNKKHKHWYKFWS) are Mitochondrial intermembrane-facing.

The protein belongs to the INA17 family. Component of the inner membrane assembly (INA) complex, composed of INA17 and INA22. Interacts with a subset of F(1)F(0)-ATP synthase subunits of the F(1)-domain and the peripheral stalk.

Its subcellular location is the mitochondrion inner membrane. Component of the INA complex (INAC) that promotes the biogenesis of mitochondrial F(1)F(0)-ATP synthase. INAC facilitates the assembly of the peripheral stalk and promotes the assembly of the catalytic F(1)-domain with the membrane-embedded F(0)-domain. The sequence is that of Inner membrane assembly complex subunit 17 from Vanderwaltozyma polyspora (strain ATCC 22028 / DSM 70294 / BCRC 21397 / CBS 2163 / NBRC 10782 / NRRL Y-8283 / UCD 57-17) (Kluyveromyces polysporus).